A 119-amino-acid chain; its full sequence is Microtubule nucleation factor SSNA1 (119 aa).

Position 2 is an N-acetylthreonine (Thr-2). The segment at 2–32 (TQQGAALQNYNNELVKCIEELCQKREELCRQ) is important for localization to the centrosome. The stretch at 13 to 70 (NELVKCIEELCQKREELCRQIQEEEDEKQRLQNEVRQLTEKLARVNENLARKIASRNE) forms a coiled coil.

This sequence belongs to the SSNA1 family. Self-associates to form fibrils. Also forms dimers as well as monomers. Interacts with SPAST. As to expression, widely expressed.

It is found in the nucleus. The protein resides in the cytoplasm. It localises to the cytoskeleton. Its subcellular location is the microtubule organizing center. The protein localises to the centrosome. It is found in the centriole. The protein resides in the midbody. It localises to the flagellum basal body. Its subcellular location is the flagellum axoneme. The protein localises to the cell projection. It is found in the axon. In terms of biological role, microtubule-binding protein which stabilizes dynamic microtubules by slowing growth and shrinkage at both plus and minus ends and serves as a sensor of microtubule damage, protecting microtubules from the microtubule-severing enzyme SPAST. Induces microtubule branching which is mediated by the formation of long SSNA1 fibrils which guide microtubule protofilaments to split apart from the mother microtubule and form daughter microtubules. Plays a role in axon outgrowth and branching. Required for cell division. This Homo sapiens (Human) protein is Microtubule nucleation factor SSNA1.